Here is a 583-residue protein sequence, read N- to C-terminus: Phosphoglucomutase, cytoplasmic (583 aa).

The interval 1–20 is disordered; that stretch reads MANFKVSRVETTPFEGQKPG. Alpha-D-glucose 1,6-bisphosphate contacts are provided by arginine 25 and serine 124. Serine 124 acts as the Phosphoserine intermediate in catalysis. Serine 124, aspartate 300, aspartate 302, and aspartate 304 together coordinate Mg(2+). Serine 124 carries the phosphoserine modification. Positions 304, 305, 368, 387, 389, and 400 each coordinate alpha-D-glucose 1,6-bisphosphate.

Belongs to the phosphohexose mutase family. Monomer. Requires Mg(2+) as cofactor.

The protein localises to the cytoplasm. The enzyme catalyses alpha-D-glucose 1-phosphate = alpha-D-glucose 6-phosphate. It carries out the reaction O-phospho-L-seryl-[protein] + alpha-D-glucose 1-phosphate = alpha-D-glucose 1,6-bisphosphate + L-seryl-[protein]. The catalysed reaction is alpha-D-glucose 1,6-bisphosphate + L-seryl-[protein] = O-phospho-L-seryl-[protein] + alpha-D-glucose 6-phosphate. Functionally, catalyzes the reversible isomerization of alpha-D-glucose 1-phosphate to alpha-D-glucose 6-phosphate. The mechanism proceeds via the intermediate compound alpha-D-glucose 1,6-bisphosphate. This enzyme participates in both the breakdown and synthesis of glucose. This Solanum tuberosum (Potato) protein is Phosphoglucomutase, cytoplasmic (PGM1).